Consider the following 280-residue polypeptide: Release factor glutamine methyltransferase (280 aa).

S-adenosyl-L-methionine contacts are provided by residues 120–124, aspartate 143, and asparagine 186; that span reads GTGSG. 186–189 lines the substrate pocket; that stretch reads NPPY.

The protein belongs to the protein N5-glutamine methyltransferase family. PrmC subfamily.

The enzyme catalyses L-glutaminyl-[peptide chain release factor] + S-adenosyl-L-methionine = N(5)-methyl-L-glutaminyl-[peptide chain release factor] + S-adenosyl-L-homocysteine + H(+). Functionally, methylates the class 1 translation termination release factors RF1/PrfA and RF2/PrfB on the glutamine residue of the universally conserved GGQ motif. This Koribacter versatilis (strain Ellin345) protein is Release factor glutamine methyltransferase.